Consider the following 347-residue polypeptide: 4-hydroxyproline 2-epimerase (347 aa).

Gln85 lines the substrate pocket. Residue Ser93 is the Proton acceptor of the active site. Substrate is bound by residues 94–95 (GS) and Asp251. Cys255 acts as the Proton donor in catalysis. 256-257 (GT) serves as a coordination point for substrate.

Belongs to the proline racemase family.

The catalysed reaction is trans-4-hydroxy-L-proline = cis-4-hydroxy-D-proline. In terms of biological role, catalyzes the epimerization of trans-4-hydroxy-L-proline (t4LHyp) to cis-4-hydroxy-D-proline (c4DHyp). May be involved in a degradation pathway of t4LHyp. Can also catalyze the epimerization of trans-3-hydroxy-L-proline (t3LHyp) to cis-3-hydroxy-D-proline (c3DHyp) in vitro. Displays no proline racemase activity. The protein is 4-hydroxyproline 2-epimerase of Allorhizobium ampelinum (strain ATCC BAA-846 / DSM 112012 / S4) (Agrobacterium vitis (strain S4)).